Reading from the N-terminus, the 218-residue chain is Glutathione S-transferase Mu 2 (218 aa).

One can recognise a GST N-terminal domain in the interval 2 to 88 (PMTLGYWNIR…YIARKHNLCG (87 aa)). A glutathione-binding site is contributed by 7 to 8 (YW). Residues serine 27 and serine 44 each carry the phosphoserine modification. Glutathione contacts are provided by residues 43-46 (RSQW), lysine 50, 59-60 (NL), and 72-73 (QS). The region spanning 90 to 208 (TEKEKIREDI…KSSRFLPRPV (119 aa)) is the GST C-terminal domain. Substrate is bound at residue tyrosine 116.

The protein belongs to the GST superfamily. Mu family. As to quaternary structure, homodimer.

Its subcellular location is the cytoplasm. The enzyme catalyses RX + glutathione = an S-substituted glutathione + a halide anion + H(+). The catalysed reaction is 11(S)-hydroxy-14(S),15(S)-epoxy-(5Z,8Z,12E)-eicosatrienoate + glutathione = (11S,15S)-dihydroxy-14(R)-S-glutathionyl-(5Z,8Z,12E)-eicosatrienoate. In terms of biological role, conjugation of reduced glutathione to a wide number of exogenous and endogenous hydrophobic electrophiles. Participates in the formation of novel hepoxilin regioisomers. Has activity toward aflatoxin B(1)-8,9-epoxide (AFBO). This is Glutathione S-transferase Mu 2 (GSTM2) from Macaca fascicularis (Crab-eating macaque).